The following is a 385-amino-acid chain: Cytochrome b (385 aa).

A run of 4 helical transmembrane segments spans residues 32-52 (FGSL…TLAM), 76-98 (WLIR…LHIG), 113-133 (AWIL…LGYV), and 179-199 (FFAL…MHLI). Heme b is bound by residues histidine 82 and histidine 96. 2 residues coordinate heme b: histidine 183 and histidine 197. Residue histidine 202 coordinates a ubiquinone. 4 helical membrane-spanning segments follow: residues 226–246 (YLFK…IFVF), 290–310 (LLGV…PKTD), 322–342 (LSKI…QLGA), and 349–369 (FIEF…IIMP).

This sequence belongs to the cytochrome b family. In terms of assembly, fungal cytochrome b-c1 complex contains 10 subunits; 3 respiratory subunits, 2 core proteins and 5 low-molecular weight proteins. Cytochrome b-c1 complex is a homodimer. The cofactor is heme b.

The protein localises to the mitochondrion inner membrane. In terms of biological role, component of the ubiquinol-cytochrome c reductase complex (complex III or cytochrome b-c1 complex) that is part of the mitochondrial respiratory chain. The b-c1 complex mediates electron transfer from ubiquinol to cytochrome c. Contributes to the generation of a proton gradient across the mitochondrial membrane that is then used for ATP synthesis. In Akanthomyces muscarius (Entomopathogenic fungus), this protein is Cytochrome b (cob).